The following is a 453-amino-acid chain: Glutamate--tRNA ligase 2 (453 aa).

The 'HIGH' region signature appears at 10–20; sequence PSPTGFLHIGG. Residues 232 to 236 carry the 'KMSKS' region motif; sequence KLSKR. Lys235 contacts ATP.

The protein belongs to the class-I aminoacyl-tRNA synthetase family. Glutamate--tRNA ligase type 1 subfamily. As to quaternary structure, monomer.

The protein resides in the cytoplasm. It carries out the reaction tRNA(Glu) + L-glutamate + ATP = L-glutamyl-tRNA(Glu) + AMP + diphosphate. Catalyzes the attachment of glutamate to tRNA(Glu) in a two-step reaction: glutamate is first activated by ATP to form Glu-AMP and then transferred to the acceptor end of tRNA(Glu). The chain is Glutamate--tRNA ligase 2 from Wolbachia sp. subsp. Brugia malayi (strain TRS).